Reading from the N-terminus, the 431-residue chain is Adenylosuccinate lyase (431 aa).

Residues 4-5 (RY), 67-69 (RHD), and 93-94 (TS) contribute to the N(6)-(1,2-dicarboxyethyl)-AMP site. The Proton donor/acceptor role is filled by H141. N(6)-(1,2-dicarboxyethyl)-AMP is bound at residue Q212. S262 acts as the Proton donor/acceptor in catalysis. N(6)-(1,2-dicarboxyethyl)-AMP contacts are provided by residues S263, 268–270 (KRN), N276, and 307–311 (SAERI).

This sequence belongs to the lyase 1 family. Adenylosuccinate lyase subfamily. As to quaternary structure, homodimer and homotetramer. Residues from neighboring subunits contribute catalytic and substrate-binding residues to each active site.

It carries out the reaction N(6)-(1,2-dicarboxyethyl)-AMP = fumarate + AMP. The enzyme catalyses (2S)-2-[5-amino-1-(5-phospho-beta-D-ribosyl)imidazole-4-carboxamido]succinate = 5-amino-1-(5-phospho-beta-D-ribosyl)imidazole-4-carboxamide + fumarate. Its pathway is purine metabolism; AMP biosynthesis via de novo pathway; AMP from IMP: step 2/2. It functions in the pathway purine metabolism; IMP biosynthesis via de novo pathway; 5-amino-1-(5-phospho-D-ribosyl)imidazole-4-carboxamide from 5-amino-1-(5-phospho-D-ribosyl)imidazole-4-carboxylate: step 2/2. Functionally, catalyzes two reactions in de novo purine nucleotide biosynthesis. Catalyzes the breakdown of 5-aminoimidazole- (N-succinylocarboxamide) ribotide (SAICAR or 2-[5-amino-1-(5-phospho-beta-D-ribosyl)imidazole-4-carboxamido]succinate) to 5-aminoimidazole-4-carboxamide ribotide (AICAR or 5-amino-1-(5-phospho-beta-D-ribosyl)imidazole-4-carboxamide) and fumarate, and of adenylosuccinate (ADS or N(6)-(1,2-dicarboxyethyl)-AMP) to adenosine monophosphate (AMP) and fumarate. In Staphylococcus aureus (strain USA300), this protein is Adenylosuccinate lyase (purB).